The chain runs to 37 residues: Cytochrome b6-f complex subunit 5 (37 aa).

Residues 5 to 25 (LLCGIVLGLIPITLMGLFVAA) traverse the membrane as a helical segment.

The protein belongs to the PetG family. In terms of assembly, the 4 large subunits of the cytochrome b6-f complex are cytochrome b6, subunit IV (17 kDa polypeptide, PetD), cytochrome f and the Rieske protein, while the 4 small subunits are PetG, PetL, PetM and PetN. The complex functions as a dimer.

Its subcellular location is the cellular thylakoid membrane. In terms of biological role, component of the cytochrome b6-f complex, which mediates electron transfer between photosystem II (PSII) and photosystem I (PSI), cyclic electron flow around PSI, and state transitions. PetG is required for either the stability or assembly of the cytochrome b6-f complex. The chain is Cytochrome b6-f complex subunit 5 from Synechococcus sp. (strain CC9311).